A 317-amino-acid polypeptide reads, in one-letter code: Lipoyl synthase (317 aa).

The tract at residues 1-28 (MDSQPQSKKAARGADKTARNPIPIIPAP) is disordered. Positions 64, 69, 75, 90, 94, 97, and 304 each coordinate [4Fe-4S] cluster. The Radical SAM core domain maps to 76-293 (FGGGTATFMI…QRDGMAMGFR (218 aa)).

This sequence belongs to the radical SAM superfamily. Lipoyl synthase family. The cofactor is [4Fe-4S] cluster.

The protein localises to the cytoplasm. It carries out the reaction [[Fe-S] cluster scaffold protein carrying a second [4Fe-4S](2+) cluster] + N(6)-octanoyl-L-lysyl-[protein] + 2 oxidized [2Fe-2S]-[ferredoxin] + 2 S-adenosyl-L-methionine + 4 H(+) = [[Fe-S] cluster scaffold protein] + N(6)-[(R)-dihydrolipoyl]-L-lysyl-[protein] + 4 Fe(3+) + 2 hydrogen sulfide + 2 5'-deoxyadenosine + 2 L-methionine + 2 reduced [2Fe-2S]-[ferredoxin]. It functions in the pathway protein modification; protein lipoylation via endogenous pathway; protein N(6)-(lipoyl)lysine from octanoyl-[acyl-carrier-protein]: step 2/2. Its function is as follows. Catalyzes the radical-mediated insertion of two sulfur atoms into the C-6 and C-8 positions of the octanoyl moiety bound to the lipoyl domains of lipoate-dependent enzymes, thereby converting the octanoylated domains into lipoylated derivatives. The protein is Lipoyl synthase of Acidithiobacillus ferrooxidans (strain ATCC 23270 / DSM 14882 / CIP 104768 / NCIMB 8455) (Ferrobacillus ferrooxidans (strain ATCC 23270)).